The primary structure comprises 758 residues: 3-isopropylmalate dehydratase (758 aa).

Residues cysteine 359, cysteine 420, and cysteine 423 each contribute to the [4Fe-4S] cluster site. Residues serine 486 and serine 488 each carry the phosphoserine modification.

This sequence belongs to the aconitase/IPM isomerase family. The cofactor is [4Fe-4S] cluster.

The catalysed reaction is (2R,3S)-3-isopropylmalate = (2S)-2-isopropylmalate. The protein operates within amino-acid biosynthesis; L-leucine biosynthesis; L-leucine from 3-methyl-2-oxobutanoate: step 2/4. In terms of biological role, catalyzes the isomerization between 2-isopropylmalate and 3-isopropylmalate, via the formation of 2-isopropylmaleate. In Schizosaccharomyces pombe (strain 972 / ATCC 24843) (Fission yeast), this protein is 3-isopropylmalate dehydratase (leu2).